The following is a 691-amino-acid chain: Germ cell nuclear acidic protein (691 aa).

An SUMO interaction motif 1 (SIM) motif is present at residues Ile-22–Val-25. Residues Val-25–Thr-488 are disordered. Positions Ser-27–Ser-36 are enriched in low complexity. Residues Cys-48–Ser-63 are compositionally biased toward polar residues. 3 short sequence motifs (SUMO interaction motif 1 (SIM)) span residues Val-76–Ile-79, Leu-97–Ile-100, and Ile-121–Ser-124. Positions Glu-86–Leu-97 are enriched in basic and acidic residues. Acidic residues predominate over residues Ser-124–Glu-333. Basic residues predominate over residues Gly-467–Thr-488. The SprT-like domain maps to Val-522–Val-677.

The protein belongs to the serine-aspartate repeat-containing protein (SDr) family. In terms of assembly, interacts (via SIM domains) with SUMO2; this interaction allows the GCNA recruitment to DPCs sites. Interacts with TOP2A; this interaction allows the resolution of topoisomerase II (TOP2A) DNA-protein cross-links. As to expression, expressed in germ cells of the testis (at protein level). Detected in skeletal muscle, liver, kidney, pancreas, heart, lung and brain. Expressed throughout spermatogenesis, from spermatogonia to elongated spermatids, in normal adult testis (at protein level).

Its subcellular location is the nucleus. The protein resides in the PML body. The protein localises to the chromosome. May play a role in DNA-protein cross-links (DPCs) clearance through a SUMO-dependent recruitment to sites of DPCs, ensuring the genomic stability by protecting germ cells and early embryos from various sources of damage. Can resolve the topoisomerase II (TOP2A) DPCs. This chain is Germ cell nuclear acidic protein, found in Homo sapiens (Human).